Here is a 479-residue protein sequence, read N- to C-terminus: Baeyer-Villiger monooxygenase AacuH (479 aa).

Residues 14–34 form a disordered region; the sequence is DSLGHPDGASRPPVSAESLSR.

This sequence belongs to the AflY oxidoreductase family.

Its pathway is secondary metabolite biosynthesis. Baeyer-Villiger monooxygenase; part of the gene cluster that mediates the biosynthesis of the tetrahydroxanthone dimer secalonic acid D. The pathway begins with the synthesis of atrochrysone thioester by the polyketide synthase AacuL. The atrochrysone carboxyl ACP thioesterase AacuM then breaks the thioester bond and releases the atrochrysone carboxylic acid from AacuL. Atrochrysone carboxylic acid is decarboxylated by the decarboxylase AacuI, and oxidized by the anthrone oxygenase AacuG to yield emodin. Emodin is then reduced to emodin hydroquinone by a yet unidentified oxidoreductase. A-ring reduction by the short chain dehydrogenase AacuN, dehydration by the scytalone dehydratase-like protein AacuK and probable spontaneous re-oxidation, results in overall deoxygenation to chrysophanol. Baeyer-Villiger oxidation by the Baeyer-Villiger monooxygenase (BVMO) AacuH then yields monodictyphenone. Monodictyphenone is transformed into compounds with the tetrahydroxanthone skeleton via methylesterification by the methyltransferase AacuQ, followed by the action of the flavin-dependent monooxygenase AacuC, the isomerase AacuP, and the short chain dehydrogenase/reductase AacuF or AacuD. AacuF and AacuD should accept the same compound as a substrate but perform the ketoreduction with a different stereoselectivity, thus yielding blennolides B and A, respectively. In the final step of the biosynthesis, the cytochrome P450 monooxygenase AacuE accepts blennolide B and/or blennolide A to conduct the dimerization reaction to furnish the tetrahydroxanthone dimers, secalonic acids D, B, and F. The protein is Baeyer-Villiger monooxygenase AacuH of Aspergillus aculeatus (strain ATCC 16872 / CBS 172.66 / WB 5094).